Reading from the N-terminus, the 1355-residue chain is NACHT, LRR and PYD domains-containing protein 1 homolog (1355 aa).

Positions 257–458 constitute an NACHT domain; that stretch reads KTVILCGDSG…SVPLLCWMVC (202 aa). 263-270 is an ATP binding site; the sequence is GDSGRGKS. The segment at 977 to 1109 is ZU5; it reads DSDQWVQVEP…FHAKILQPMF (133 aa). An FIIND domain is found at 977 to 1252; that stretch reads DSDQWVQVEP…NKTESDLFQS (276 aa). The tract at residues 1110 to 1252 is UPA; the sequence is SPKTVLVKLG…NKTESDLFQS (143 aa). The CARD domain occupies 1278–1354; the sequence is LIKSVENVDT…NLLNHLPSSD (77 aa).

Belongs to the NLRP family. As to quaternary structure, interacts with the C-terminal part of nlrp1 (NACHT, LRR and PYD domains-containing protein 1, C-terminus) in absence of pathogens and other damage-associated signals. In terms of assembly, interacts with the N-terminal part of nlrp1 (NACHT, LRR and PYD domains-containing protein 1, N-terminus) in absence of pathogens and other damage-associated signals. Homomultimer; forms the nlrp1 inflammasome polymeric complex, a filament composed of homopolymers of this form in response to pathogens and other damage-associated signals. The nlrp1 inflammasome polymeric complex associates with pycard/asc. Interacts (via CARD domain) with pycard/asc (via CARD domain); leading to pro-inflammatory caspases (caspa and/or caspb) recruitment. Pro-caspase-a and pro-caspase-b filament formation increases local enzyme concentration, resulting in trans-autocleavage and activation. Active caspa and caspb then processes il1b and il18 precursors, leading to the release of mature cytokines in the extracellular milieu and inflammatory response. Autocatalytically cleaved. Autocatalytic cleavage in FIIND region occurs constitutively, prior to activation signals, and is required for inflammasome activity (IL1B release), possibly by facilitating pro-inflammatory caspases (caspa and/or caspb) binding. Both N- and C-terminal parts remain associated non-covalently. Post-translationally, ubiquitinated in response to pathogen-associated signals, leading to its degradation by the proteasome and subsequent release of the cleaved C-terminal part of the protein (NACHT, LRR and PYD domains-containing protein 1, C-terminus), which polymerizes and forms the nlrp1 inflammasome. As to expression, expressed in adult spleen, head kidney, gill and skin and also in the embryo.

It localises to the cytoplasm. It is found in the inflammasome. Nlrp1 inflammasome is activated by pathogens and other damage-associated signals: activation promotes ubiquitination and degradation of the N-terminal part, releasing the cleaved C-terminal part of the protein (NACHT, LRR and PYD domains-containing protein 1, C-terminus), which polymerizes and forms the nlrp1 inflammasome. Its function is as follows. Acts as the sensor component of the nlrp1 inflammasome, which mediates inflammasome activation in response to various pathogen-associated signals, leading to subsequent pyroptosis. Inflammasomes are supramolecular complexes that assemble in the cytosol in response to pathogens and other damage-associated signals and play critical roles in innate immunity and inflammation. Acts as a recognition receptor (PRR): recognizes specific pathogens and other damage-associated signals, and mediates the formation of the inflammasome polymeric complex. In response to pathogen-associated signals, the N-terminal part of nlrp1 is degraded by the proteasome, releasing the cleaved C-terminal part of the protein (NACHT, LRR and PYD domains-containing protein 1, C-terminus), which polymerizes to initiate the formation of the inflammasome complex: the inflammasome recruits and activate pro-inflammatory caspases (caspa and/or caspb), leading to pyroptosis. Functionally, constitutes the precursor of the nlrp1 inflammasome, which mediates autoproteolytic processing within the FIIND domain to generate the N-terminal and C-terminal parts, which are associated non-covalently in absence of pathogens and other damage-associated signals. In terms of biological role, regulatory part that prevents formation of the nlrp1 inflammasome: in absence of pathogens and other damage-associated signals, interacts with the C-terminal part of nlrp1 (NACHT, LRR and PYD domains-containing protein 1, C-terminus), preventing activation of the nlrp1 inflammasome. In response to pathogen-associated signals, this part is ubiquitinated and degraded by the proteasome, releasing the cleaved C-terminal part of the protein, which polymerizes and forms the nlrp1 inflammasome. Constitutes the active part of the nlrp1 inflammasome. In absence of pathogens and other damage-associated signals, interacts with the N-terminal part of nlrp1 (NACHT, LRR and PYD domains-containing protein 1, N-terminus), preventing activation of the nlrp1 inflammasome. In response to pathogen-associated signals, the N-terminal part of nlrp1 is degraded by the proteasome, releasing this form, which polymerizes to form the nlrp1 inflammasome complex: the nlrp1 inflammasome complex then directly recruits and activates pro-inflammatory caspases (caspa and/or caspb) activation, leading to subsequent pyroptosis. The sequence is that of NACHT, LRR and PYD domains-containing protein 1 homolog from Danio rerio (Zebrafish).